We begin with the raw amino-acid sequence, 186 residues long: Translation initiation factor IF-3 (186 aa).

A disordered region spans residues 1–21 (MINRSSGKDRDRSRSGDKELR).

It belongs to the IF-3 family. As to quaternary structure, monomer.

The protein localises to the cytoplasm. Functionally, IF-3 binds to the 30S ribosomal subunit and shifts the equilibrium between 70S ribosomes and their 50S and 30S subunits in favor of the free subunits, thus enhancing the availability of 30S subunits on which protein synthesis initiation begins. The polypeptide is Translation initiation factor IF-3 (Borrelia turicatae (strain 91E135)).